Consider the following 155-residue polypeptide: Ribosomal RNA large subunit methyltransferase H (155 aa).

S-adenosyl-L-methionine-binding positions include leucine 72, glycine 103, and 122-127 (LSTMTL).

It belongs to the RNA methyltransferase RlmH family. As to quaternary structure, homodimer.

It localises to the cytoplasm. The catalysed reaction is pseudouridine(1915) in 23S rRNA + S-adenosyl-L-methionine = N(3)-methylpseudouridine(1915) in 23S rRNA + S-adenosyl-L-homocysteine + H(+). In terms of biological role, specifically methylates the pseudouridine at position 1915 (m3Psi1915) in 23S rRNA. This Nitrosomonas eutropha (strain DSM 101675 / C91 / Nm57) protein is Ribosomal RNA large subunit methyltransferase H.